Consider the following 201-residue polypeptide: MSRYRGPRFKKIRRLGALPGLTSKRPRAGSDLRNQSRSGKKSQYRIRLEEKQKLRFHYGLTERQLLKYVRIAGKAKGSTGQVLLQLLEMRLDNILFRLGMALTIPQARQLVNHGHILVNGRIVDIPSYRCKPRDIITVKDEQNSRTLVQNLLDSSAPEELPNHLTLHTFQYEGLVNQIIDRKCVGLKINELLVVEYYSRQT.

The disordered stretch occupies residues Gly20–Tyr44. In terms of domain architecture, S4 RNA-binding spans Met89 to Leu152.

It belongs to the universal ribosomal protein uS4 family. In terms of assembly, part of the 30S ribosomal subunit. Contacts protein S5. The interaction surface between S4 and S5 is involved in control of translational fidelity.

The protein resides in the plastid. Its subcellular location is the chloroplast. In terms of biological role, one of the primary rRNA binding proteins, it binds directly to 16S rRNA where it nucleates assembly of the body of the 30S subunit. Its function is as follows. With S5 and S12 plays an important role in translational accuracy. The chain is Small ribosomal subunit protein uS4c (rps4) from Arabis hirsuta (Hairy rock-cress).